An 860-amino-acid polypeptide reads, in one-letter code: MENQKENLFSEPHKRGLVKSPLQESSKANVVLAEIQPDLGPLTTPTKPKEVSQGEPWTPTANLKMLISAVSPEIRSRDQKRGLSDNRSGLPEARDCLHEPQAKTNEKSQPSRKEKSLGLLCHKFLARYPKYPNPAVNNDICLDEVAEELDVERRRIYDIVNVLESLHMVSRLAKNRYTWHGRHNLTKTLGTLKSVGEENKYAEQIMMIKRKEHEQEFDFIKSCGLEDHHVIKSTAGQNGHSDMCFVELPGVEFRAASANSRKDKSLRVMSQKFVMLFLVSTPQIVSLEIAAKILIGEDHVEDLDKSKFKTKIRRLYDIANVLSSLDLIKKVHVTEERGRKPAFKWTGPEISPNNSGSSPVMPLTASLEAEQSAKENCAKNLFSTRGKPSFTRHPSLIKLVKSIENDRRKISSAPSSPVKSSKAESSQNSPPVPNKMAQLAAICKMQLEEQSSEPRKRVKVNLTRSGHYKPLAPLDPAVNTELELLAPSLIQPLGMVPLIPSPLSSAVPVILPQAPSGPSYAIYLQPAQAQMLTPPHGLSPTVCPTQSSNATGSKDPTDAPTEKTATDATKPGSLQPAPERQGAKNRSKETTGDRGTKRTGALEDGGPGPIKKPKEDLKALENVPTPTTLFPSGYLIPLTQCPSLGPDPMLSNTENSGTLSPNHRIYGSPIAGVIPVASSELTAVNFPPFHVTPLKLMVSPTSMAAVPVGNSPALSSSHPAPTQNPSSAIVNFTLQHLGLISPGVQMSASPGPGAGTVPLSPRVEADNLSSRQGRATIHDSPVLGQSQLNGQPVAGTGAQQPVPVTPKGSQLVAESFFRTPGGPTKPTSSSFMDFDGANKTSFGTLFVPQRKLEVSTEDVH.

Positions 1–114 (MENQKENLFS…NEKSQPSRKE (114 aa)) are disordered. Residue Ser71 is modified to Phosphoserine. Composition is skewed to basic and acidic residues over residues 74–84 (IRSRDQKRGLS) and 92–114 (EARDCLHEPQAKTNEKSQPSRKE). 2 DNA-binding regions span residues 112 to 181 (RKEK…TWHG) and 261 to 347 (RKDK…KWTG). Disordered regions lie at residues 407-433 (RRKISSAPSSPVKSSKAESSQNSPPVP) and 533-616 (TPPH…PKED). Residues 411-426 (SSAPSSPVKSSKAESS) show a composition bias toward low complexity. Residues Ser412 and Ser416 each carry the phosphoserine modification. A compositionally biased stretch (polar residues) spans 542–554 (VCPTQSSNATGSK). 2 stretches are compositionally biased toward basic and acidic residues: residues 555–565 (DPTDAPTEKTA) and 586–596 (RSKETTGDRGT).

Belongs to the E2F/DP family. In terms of assembly, homodimer and heterodimer: mainly forms homodimers and, to a lesser extent, heterodimers with E2F8. Dimerization is important for DNA-binding. Interacts with HIF1A.

The protein localises to the nucleus. Functionally, atypical E2F transcription factor that participates in various processes such as angiogenesis and polyploidization of specialized cells. Mainly acts as a transcription repressor that binds DNA independently of DP proteins and specifically recognizes the E2 recognition site 5'-TTTC[CG]CGC-3'. Directly represses transcription of classical E2F transcription factors such as E2F1: component of a feedback loop in S phase by repressing the expression of E2F1, thereby preventing p53/TP53-dependent apoptosis. Plays a key role in polyploidization of cells in placenta and liver by regulating the endocycle, probably by repressing genes promoting cytokinesis and antagonizing action of classical E2F proteins (E2F1, E2F2 and/or E2F3). Required for placental development by promoting polyploidization of trophoblast giant cells. Acts as a promoter of sprouting angiogenesis, possibly by acting as a transcription activator: associates with HIF1A, recognizes and binds the VEGFA promoter, which is different from canonical E2 recognition site, and activates expression of the VEGFA gene. The polypeptide is Transcription factor E2F8 (E2f8) (Rattus norvegicus (Rat)).